An 88-amino-acid polypeptide reads, in one-letter code: MGTARFLSAVLLLSVPLMVTFPALLSAEYHDGRVDICSLPSDSGDCLRFFEMWYFDGTTCTKFVYGGYGGNDNRFPTEKACMKRCAKA.

Positions M1 to A27 are cleaved as a signal peptide. The propeptide occupies E28–R33. Residues C37–C85 enclose the BPTI/Kunitz inhibitor domain. Intrachain disulfides connect C37–C85 and C60–C81.

Belongs to the venom Kunitz-type family. 03 (sub-Kunitz) subfamily. Expressed by the venom gland.

It is found in the secreted. In terms of biological role, serine protease inhibitor that inhibits trypsin at a molar ratio of 1:1. This chain is Kunitz-type U15-theraphotoxin-Hs1a, found in Cyriopagopus schmidti (Chinese bird spider).